The following is a 202-amino-acid chain: dITP/XTP pyrophosphatase (202 aa).

11–16 (TNNANK) is a substrate binding site. The Proton acceptor role is filled by aspartate 73. Position 73 (aspartate 73) interacts with Mg(2+). Substrate contacts are provided by residues serine 74, 155–158 (FGYD), lysine 178, and 183–184 (HR).

This sequence belongs to the HAM1 NTPase family. As to quaternary structure, homodimer. It depends on Mg(2+) as a cofactor.

The catalysed reaction is XTP + H2O = XMP + diphosphate + H(+). It carries out the reaction dITP + H2O = dIMP + diphosphate + H(+). The enzyme catalyses ITP + H2O = IMP + diphosphate + H(+). Its function is as follows. Pyrophosphatase that catalyzes the hydrolysis of nucleoside triphosphates to their monophosphate derivatives, with a high preference for the non-canonical purine nucleotides XTP (xanthosine triphosphate), dITP (deoxyinosine triphosphate) and ITP. Seems to function as a house-cleaning enzyme that removes non-canonical purine nucleotides from the nucleotide pool, thus preventing their incorporation into DNA/RNA and avoiding chromosomal lesions. This is dITP/XTP pyrophosphatase from Lactiplantibacillus plantarum (strain ATCC BAA-793 / NCIMB 8826 / WCFS1) (Lactobacillus plantarum).